We begin with the raw amino-acid sequence, 408 residues long: Cytochrome bc1 complex Rieske iron-sulfur subunit (408 aa).

3 consecutive transmembrane segments (helical) span residues 56-76, 98-118, and 162-182; these read VTFW…TYIF, MLGI…VLYV, and LIMG…IAPM. The Rieske domain occupies 293–390; the sequence is HGPRNAVMLI…ITVDEEGYLI (98 aa). [2Fe-2S] cluster is bound by residues cysteine 333, histidine 335, cysteine 352, and histidine 355. A disulfide bridge links cysteine 338 with cysteine 354.

Belongs to the Rieske iron-sulfur protein family. In terms of assembly, the cytochrome bc1 complex is composed of a cytochrome b (QcrB), the Rieske iron-sulfur protein (QcrA) and a diheme cytochrome c (QcrC) subunit. The bc1 complex forms a supercomplex with cytochrome c oxidase (cytochrome aa3). Requires [2Fe-2S] cluster as cofactor.

Its subcellular location is the cell membrane. Iron-sulfur subunit of the cytochrome bc1 complex, an essential component of the respiratory electron transport chain required for ATP synthesis. The bc1 complex catalyzes the oxidation of menaquinol and the reduction of cytochrome c in the respiratory chain. The bc1 complex operates through a Q-cycle mechanism that couples electron transfer to generation of the proton gradient that drives ATP synthesis. The protein is Cytochrome bc1 complex Rieske iron-sulfur subunit (qcrA) of Corynebacterium glutamicum (strain ATCC 13032 / DSM 20300 / JCM 1318 / BCRC 11384 / CCUG 27702 / LMG 3730 / NBRC 12168 / NCIMB 10025 / NRRL B-2784 / 534).